The chain runs to 48 residues: uncharacterized protein (48 aa).

Residues 18-38 (IIIKYWYIDLTITIFAFLILY) traverse the membrane as a helical segment.

It is found in the host membrane. This is an uncharacterized protein from Acidianus bottle-shaped virus (isolate Italy/Pozzuoli) (ABV).